We begin with the raw amino-acid sequence, 391 residues long: 3-ketoacyl-CoA thiolase (391 aa).

The Acyl-thioester intermediate role is filled by Cys95. Catalysis depends on proton acceptor residues His347 and Cys377.

Belongs to the thiolase-like superfamily. Thiolase family. In terms of assembly, heterotetramer of two alpha chains (FadB) and two beta chains (FadA).

It localises to the cytoplasm. It carries out the reaction an acyl-CoA + acetyl-CoA = a 3-oxoacyl-CoA + CoA. The protein operates within lipid metabolism; fatty acid beta-oxidation. Functionally, catalyzes the final step of fatty acid oxidation in which acetyl-CoA is released and the CoA ester of a fatty acid two carbons shorter is formed. This Stutzerimonas stutzeri (strain A1501) (Pseudomonas stutzeri) protein is 3-ketoacyl-CoA thiolase.